We begin with the raw amino-acid sequence, 280 residues long: Bis(5'-nucleosyl)-tetraphosphatase, symmetrical (280 aa).

This sequence belongs to the Ap4A hydrolase family.

The enzyme catalyses P(1),P(4)-bis(5'-adenosyl) tetraphosphate + H2O = 2 ADP + 2 H(+). In terms of biological role, hydrolyzes diadenosine 5',5'''-P1,P4-tetraphosphate to yield ADP. The sequence is that of Bis(5'-nucleosyl)-tetraphosphatase, symmetrical from Shigella flexneri serotype 5b (strain 8401).